A 63-amino-acid chain; its full sequence is Potassium channel toxin alpha-KTx 21.1 (63 aa).

An N-terminal signal peptide occupies residues 1–27 (MQFSGVVLILISMTLVNFVFFETKVEA). Intrachain disulfides connect cysteine 33–cysteine 53, cysteine 38–cysteine 58, and cysteine 42–cysteine 60.

The protein belongs to the short scorpion toxin superfamily. Potassium channel inhibitor family. Alpha-KTx 21 subfamily. Expressed by the venom gland.

The protein localises to the secreted. Functionally, reversibly and voltage-independently blocks voltage-gated potassium channels rKv1.2/KCNA2 (73%) (IC(50)=196 nM), hKv1.3/KCNA3 (50%) (IC(50)=508 nM), Shaker IR (30%), rKv1.6/KCNA6 (22%) (at 0.5 uM). Interaction of Ts15 with Kv1.3/KCNA3 is stronger than its interaction with Kv1.2/KCNA2. This chain is Potassium channel toxin alpha-KTx 21.1, found in Tityus serrulatus (Brazilian scorpion).